Consider the following 423-residue polypeptide: Enolase (423 aa).

Residue Gln-162 participates in (2R)-2-phosphoglycerate binding. Glu-204 functions as the Proton donor in the catalytic mechanism. Asp-241, Glu-284, and Asp-311 together coordinate Mg(2+). Lys-336, Arg-365, Ser-366, and Lys-387 together coordinate (2R)-2-phosphoglycerate. Lys-336 acts as the Proton acceptor in catalysis.

The protein belongs to the enolase family. Mg(2+) serves as cofactor.

Its subcellular location is the cytoplasm. The protein resides in the secreted. The protein localises to the cell surface. It carries out the reaction (2R)-2-phosphoglycerate = phosphoenolpyruvate + H2O. Its pathway is carbohydrate degradation; glycolysis; pyruvate from D-glyceraldehyde 3-phosphate: step 4/5. Catalyzes the reversible conversion of 2-phosphoglycerate (2-PG) into phosphoenolpyruvate (PEP). It is essential for the degradation of carbohydrates via glycolysis. This Bartonella bacilliformis (strain ATCC 35685 / KC583 / Herrer 020/F12,63) protein is Enolase.